A 452-amino-acid chain; its full sequence is Tylactone mycaminosyltransferase (452 aa).

A compositionally biased stretch (basic and acidic residues) spans 1–16; it reads MRRALDDRRRGPHGPE. The segment at 1–20 is disordered; the sequence is MRRALDDRRRGPHGPEGKPP.

The protein belongs to the glycosyltransferase 28 family.

It carries out the reaction tylactone + dTDP-alpha-D-mycaminose = 5-O-beta-D-mycaminosyltylactone + dTDP + H(+). It functions in the pathway antibiotic biosynthesis; tylosin biosynthesis. The activity of TylM2 is substantially increased by the addition of the accessory protein TylM3. In terms of biological role, involved in the biosynthesis of the macrolide antibiotic tylosin derived from the polyketide lactone tylactone. Catalyzes the transfer of alpha-D-mycaminosyl from dTDP-alpha-D-mycaminose to the 5-hydroxyl group of tylactone to yield 5-O-mycaminosytylactone. It can also accept 16-membered tylactone and 12-membered ring macrolide. The chain is Tylactone mycaminosyltransferase from Streptomyces fradiae (Streptomyces roseoflavus).